A 321-amino-acid polypeptide reads, in one-letter code: Fe-S cluster assembly protein DRE2 (321 aa).

Residues 1-140 (MNNTAHSMSE…RRPASSSVAE (140 aa)) are N-terminal SAM-like domain. Positions 128 to 138 (IESRRPASSSV) are enriched in polar residues. The disordered stretch occupies residues 128–166 (IESRRPASSSVAEKDSTASSGMGAVKLRRKPNENGGHQQ). A linker region spans residues 140 to 177 (EKDSTASSGMGAVKLRRKPNENGGHQQKKALLWATQPE). C202, C217, C220, and C222 together coordinate [2Fe-2S] cluster. The fe-S binding site A stretch occupies residues 202–222 (CTVDFSAPRTRRKRACKGCTC). The tract at residues 239 to 263 (QLDPSEVGGTGGKRTEVTTTVKGPN) is disordered. Positions 283, 286, 294, and 297 each coordinate [4Fe-4S] cluster. 2 consecutive short sequence motifs (cx2C motif) follow at residues 283 to 286 (CGSC) and 294 to 297 (CSSC). Positions 283 to 297 (CGSCFLGDAFRCSSC) are fe-S binding site B.

It belongs to the anamorsin family. Monomer. Interacts with TAH18. Interacts with MIA40. The cofactor is [2Fe-2S] cluster. [4Fe-4S] cluster serves as cofactor.

Its subcellular location is the cytoplasm. It localises to the mitochondrion intermembrane space. In terms of biological role, component of the cytosolic iron-sulfur (Fe-S) protein assembly (CIA) machinery required for the maturation of extramitochondrial Fe-S proteins. Part of an electron transfer chain functioning in an early step of cytosolic Fe-S biogenesis, facilitating the de novo assembly of a [4Fe-4S] cluster on the scaffold complex CFD1-NBP35. Electrons are transferred to DRE2 from NADPH via the FAD- and FMN-containing protein TAH18. TAH18-DRE2 are also required for the assembly of the diferric tyrosyl radical cofactor of ribonucleotide reductase (RNR), probably by providing electrons for reduction during radical cofactor maturation in the catalytic small subunit RNR2. In Malassezia globosa (strain ATCC MYA-4612 / CBS 7966) (Dandruff-associated fungus), this protein is Fe-S cluster assembly protein DRE2.